A 313-amino-acid polypeptide reads, in one-letter code: Proline iminopeptidase (313 aa).

The AB hydrolase-1 domain maps to 35–298; sequence KPVVMLHGGP…SPASGHSAFE (264 aa). S110 functions as the Nucleophile in the catalytic mechanism. D266 is a catalytic residue. H294 acts as the Proton donor in catalysis.

It belongs to the peptidase S33 family. In terms of assembly, homooligomer.

The protein resides in the cytoplasm. It catalyses the reaction Release of N-terminal proline from a peptide.. Its function is as follows. May be involved in proline metabolism and sensitivity to ascamycin. Has ascamycin dealanylating activity. The polypeptide is Proline iminopeptidase (pip) (Xanthomonas citri (Xanthomonas campestris pv. citri)).